Consider the following 121-residue polypeptide: MIQTQTYLTVADNSGAKKIMCIRILGGNRKYASIGDVIIGVVKDATPNMPVKRSDVVRAVIMRTKNTIRRKDGMSIRFDDNAAVIINKENNPRGTRVFGPIARELRDKDFTKIVSLAPEVL.

It belongs to the universal ribosomal protein uL14 family. As to quaternary structure, part of the 50S ribosomal subunit.

The protein resides in the plastid. Its subcellular location is the chloroplast. In terms of biological role, binds to 23S rRNA. In Guillardia theta (Cryptophyte), this protein is Large ribosomal subunit protein uL14c.